Consider the following 235-residue polypeptide: Small ribosomal subunit protein uS2c (235 aa).

Belongs to the universal ribosomal protein uS2 family.

It is found in the plastid. The protein resides in the chloroplast. In Marchantia polymorpha (Common liverwort), this protein is Small ribosomal subunit protein uS2c (rps2).